The sequence spans 222 residues: uncharacterized protein (222 aa).

The protein belongs to the ycf73 family.

The protein resides in the plastid. Its subcellular location is the chloroplast. This is an uncharacterized protein from Oryza nivara (Indian wild rice).